The chain runs to 141 residues: Hemoglobin subunit alpha-1 (141 aa).

In terms of domain architecture, Globin spans 1–141 (VLTDEDKARV…LSKDLVSKYR (141 aa)). H58 provides a ligand contact to O2. H87 contributes to the heme b binding site.

Belongs to the globin family. Heterotetramer of two alpha chains and two beta chains. In terms of tissue distribution, red blood cells.

Involved in oxygen transport from the lung to the various peripheral tissues. This chain is Hemoglobin subunit alpha-1, found in Naja naja (Indian cobra).